The sequence spans 98 residues: ESAT-6-like protein EsxK (98 aa).

The protein belongs to the WXG100 family. CFP-10 subfamily. As to quaternary structure, strongly interacts with EsxL to form a heterodimeric complex under reducing conditions.

It localises to the secreted. The protein is ESAT-6-like protein EsxK of Mycobacterium tuberculosis (strain CDC 1551 / Oshkosh).